The following is a 622-amino-acid chain: Cilia- and flagella-associated protein 206 (622 aa).

This sequence belongs to the CFAP206 family.

The protein localises to the cytoplasm. It localises to the cytoskeleton. The protein resides in the cilium axoneme. Its subcellular location is the cilium basal body. In terms of biological role, essential for sperm motility and is involved in the regulation of the beating frequency of motile cilia on the epithelial cells of the respiratory tract. Required for the establishment of radial spokes in sperm flagella. This chain is Cilia- and flagella-associated protein 206, found in Rattus norvegicus (Rat).